A 1257-amino-acid chain; its full sequence is Endochitinase A (1257 aa).

The first 21 residues, 1–21 (MVFKPLTIAAAIAGLTPFVSA), serve as a signal peptide directing secretion. The 312-residue stretch at 28–339 (SNVAVYYGQG…DVIKDILVAV (312 aa)) folds into the GH18 domain. E175 serves as the catalytic Proton donor. Disordered stretches follow at residues 364-429 (TPVA…STPV), 595-980 (TPAA…LAPI), and 1141-1174 (DALTASPSGSQPAGESSPGQSAPTAPASTAPTTT). The span at 595–696 (TPAASSSPAV…STPVRSTSSV (102 aa)) shows a compositional bias: low complexity. The span at 700–715 (KSSSAPVIPKPSSTVI) shows a compositional bias: polar residues. Positions 716 to 935 (ATFTSSSGSL…ASGSGAQDST (220 aa)) are enriched in low complexity. An N-linked (GlcNAc...) asparagine glycan is attached at N825. The span at 940 to 964 (HASTLSPSYSTPLASASGQTGSPTT) shows a compositional bias: polar residues. A glycan (N-linked (GlcNAc...) asparagine) is linked at N973. Polar residues predominate over residues 1145–1154 (ASPSGSQPAG). The segment covering 1156 to 1174 (SSPGQSAPTAPASTAPTTT) has biased composition (low complexity). G1231 carries GPI-anchor amidated glycine lipidation. Positions 1232-1257 (AASRVSRLQHGAGAVSAFALFLLAAI) are cleaved as a propeptide — removed in mature form.

Belongs to the glycosyl hydrolase 18 family. Chitinase class III subfamily. O-glycosylated.

Its subcellular location is the cell membrane. It is found in the secreted. The protein localises to the cell wall. The catalysed reaction is Random endo-hydrolysis of N-acetyl-beta-D-glucosaminide (1-&gt;4)-beta-linkages in chitin and chitodextrins.. Functionally, GPI-anchored chitinase involved in the degradation of chitin, a component of the cell walls of fungi and exoskeletal elements of some animals (including worms and arthropods). Required to reshape the cell wall at the sites where cell wall remodeling and/or cell wall maturation actively take place such as sites of conidia formation. This is Endochitinase A (ctcA) from Aspergillus niger (strain ATCC MYA-4892 / CBS 513.88 / FGSC A1513).